The sequence spans 128 residues: Small ribosomal subunit protein bS6 (128 aa).

The segment at 100 to 128 is disordered; sequence SPMAKAKEERFTRRDDERREEATEAASEE. Residues 104 to 121 show a composition bias toward basic and acidic residues; the sequence is KAKEERFTRRDDERREEA.

Belongs to the bacterial ribosomal protein bS6 family.

Functionally, binds together with bS18 to 16S ribosomal RNA. The sequence is that of Small ribosomal subunit protein bS6 from Aeromonas hydrophila subsp. hydrophila (strain ATCC 7966 / DSM 30187 / BCRC 13018 / CCUG 14551 / JCM 1027 / KCTC 2358 / NCIMB 9240 / NCTC 8049).